Reading from the N-terminus, the 103-residue chain is MADKEKKKKESILDLSKYIDKTIRVKFQGGREASGILKGFDPLLNLVLDGTMEYMRDPDDQYKLTEDTRQLGLVVCRGTSVVLICPQDGMEAIPNPFVQQQDT.

At A2 the chain carries N-acetylalanine. The 81-residue stretch at 10–90 (ESILDLSKYI…VVLICPQDGM (81 aa)) folds into the Sm domain.

It belongs to the snRNP Sm proteins family. As to quaternary structure, component of the precatalytic spliceosome (spliceosome B complex). Component of the U4/U6-U5 tri-snRNP complex, a building block of the precatalytic spliceosome (spliceosome B complex). The U4/U6-U5 tri-snRNP complex is composed of the U4, U6 and U5 snRNAs and at least PRPF3, PRPF4, PRPF6, PRPF8, PRPF31, SNRNP200, TXNL4A, SNRNP40, SNRPB, SNRPD1, SNRPD2, SNRPD3, SNRPE, SNRPF, SNRPG, DDX23, CD2BP2, PPIH, SNU13, EFTUD2, SART1 and USP39, plus LSM2, LSM3, LSM4, LSM5, LSM6, LSM7 and LSM8. LSM2, LSM3, LSM4, LSM5, LSM6, LSM7 and LSM8 form a heptameric, ring-shaped subcomplex (the LSM2-8 complex) that is part of the U4/U6-U5 tri-snRNP complex and the precatalytic spliceosome. Interacts with TACC1.

It localises to the nucleus. Functionally, plays a role in pre-mRNA splicing as component of the U4/U6-U5 tri-snRNP complex that is involved in spliceosome assembly, and as component of the precatalytic spliceosome (spliceosome B complex). The heptameric LSM2-8 complex binds specifically to the 3'-terminal U-tract of U6 snRNA. In Mus musculus (Mouse), this protein is U6 snRNA-associated Sm-like protein LSm7 (Lsm7).